The chain runs to 145 residues: uncharacterized protein (145 aa).

This is an uncharacterized protein from Deinococcus radiodurans (strain ATCC 13939 / DSM 20539 / JCM 16871 / CCUG 27074 / LMG 4051 / NBRC 15346 / NCIMB 9279 / VKM B-1422 / R1).